Consider the following 257-residue polypeptide: Large ribosomal subunit protein uL2 (257 aa).

The disordered stretch occupies residues 210-231; that stretch reads PHGGGNHQHIGKASTVKRGTSA.

The protein belongs to the universal ribosomal protein uL2 family.

It is found in the cytoplasm. The chain is Large ribosomal subunit protein uL2 (RpL8) from Mamestra brassicae (Cabbage moth).